The sequence spans 395 residues: NAD(P)H-quinone oxidoreductase subunit H (395 aa).

This sequence belongs to the complex I 49 kDa subunit family. NDH-1 can be composed of about 15 different subunits; different subcomplexes with different compositions have been identified which probably have different functions.

It localises to the cellular thylakoid membrane. It carries out the reaction a plastoquinone + NADH + (n+1) H(+)(in) = a plastoquinol + NAD(+) + n H(+)(out). The catalysed reaction is a plastoquinone + NADPH + (n+1) H(+)(in) = a plastoquinol + NADP(+) + n H(+)(out). In terms of biological role, NDH-1 shuttles electrons from an unknown electron donor, via FMN and iron-sulfur (Fe-S) centers, to quinones in the respiratory and/or the photosynthetic chain. The immediate electron acceptor for the enzyme in this species is believed to be plastoquinone. Couples the redox reaction to proton translocation, and thus conserves the redox energy in a proton gradient. Cyanobacterial NDH-1 also plays a role in inorganic carbon-concentration. This chain is NAD(P)H-quinone oxidoreductase subunit H, found in Prochlorococcus marinus (strain MIT 9301).